The sequence spans 1130 residues: BTB/POZ domain-containing protein 7 (1130 aa).

Positions 1–10 (MGANASNYPH) are enriched in polar residues. The disordered stretch occupies residues 1 to 24 (MGANASNYPHSCSPRVGGNSQAQQ). G2 is lipidated: N-myristoyl glycine. BTB domains lie at 142–211 (TDVD…GMED) and 247–341 (YDVV…DLSV). The BACK domain maps to 413-479 (YGSKWVHRQA…WGEHQLMKRI (67 aa)). The residue at position 722 (S722) is a Phosphoserine. Disordered stretches follow at residues 898–1050 (SEAG…PAHV) and 1062–1130 (FGLT…KSAL). 2 stretches are compositionally biased toward basic and acidic residues: residues 923–935 (PTLE…RENQ) and 996–1005 (KKQEDPRREY). At S1008 the chain carries Phosphoserine. Positions 1063–1075 (GLTSNRPPSHSAC) are enriched in polar residues. 2 stretches are compositionally biased toward basic and acidic residues: residues 1080–1090 (LEERSSRRLTD) and 1101–1112 (RNADLERGDSIS).

Specifically expressed in embryonic epithelia.

Its subcellular location is the nucleus. Acts as a mediator of epithelial dynamics and organ branching by promoting cleft progression. Induced following accumulation of fibronectin in forming clefts, leading to local expression of the cell-scattering SNAIL2 and suppression of E-cadherin levels, thereby altering cell morphology and reducing cell-cell adhesion. This stimulates cell separation at the base of forming clefts by local, dynamic intercellular gap formation and promotes cleft progression. The chain is BTB/POZ domain-containing protein 7 (Btbd7) from Mus musculus (Mouse).